The primary structure comprises 388 residues: Alanine racemase (388 aa).

Catalysis depends on lysine 44, which acts as the Proton acceptor; specific for D-alanine. N6-(pyridoxal phosphate)lysine is present on lysine 44. Arginine 142 serves as a coordination point for substrate. Tyrosine 273 serves as the catalytic Proton acceptor; specific for L-alanine. Position 321 (methionine 321) interacts with substrate.

The protein belongs to the alanine racemase family. The cofactor is pyridoxal 5'-phosphate.

It catalyses the reaction L-alanine = D-alanine. The protein operates within amino-acid biosynthesis; D-alanine biosynthesis; D-alanine from L-alanine: step 1/1. Functionally, catalyzes the interconversion of L-alanine and D-alanine. May also act on other amino acids. This Mycobacterium avium (strain 104) protein is Alanine racemase (alr).